A 78-amino-acid chain; its full sequence is Small ribosomal subunit protein bS20 (78 aa).

Positions 55–78 (KSKGLIHKNKASRDKARLASKLAK) are disordered.

It belongs to the bacterial ribosomal protein bS20 family.

Binds directly to 16S ribosomal RNA. The sequence is that of Small ribosomal subunit protein bS20 from Streptococcus mutans serotype c (strain ATCC 700610 / UA159).